Reading from the N-terminus, the 233-residue chain is Phosphatidylserine decarboxylase proenzyme (233 aa).

Ser-190 acts as the Schiff-base intermediate with substrate; via pyruvic acid in catalysis. Ser-190 carries the post-translational modification Pyruvic acid (Ser); by autocatalysis.

Belongs to the phosphatidylserine decarboxylase family. PSD-A subfamily. Heterodimer of a large membrane-associated beta subunit and a small pyruvoyl-containing alpha subunit. Pyruvate serves as cofactor. Is synthesized initially as an inactive proenzyme. Formation of the active enzyme involves a self-maturation process in which the active site pyruvoyl group is generated from an internal serine residue via an autocatalytic post-translational modification. Two non-identical subunits are generated from the proenzyme in this reaction, and the pyruvate is formed at the N-terminus of the alpha chain, which is derived from the carboxyl end of the proenzyme. The post-translation cleavage follows an unusual pathway, termed non-hydrolytic serinolysis, in which the side chain hydroxyl group of the serine supplies its oxygen atom to form the C-terminus of the beta chain, while the remainder of the serine residue undergoes an oxidative deamination to produce ammonia and the pyruvoyl prosthetic group on the alpha chain.

It is found in the cell membrane. It catalyses the reaction a 1,2-diacyl-sn-glycero-3-phospho-L-serine + H(+) = a 1,2-diacyl-sn-glycero-3-phosphoethanolamine + CO2. Its pathway is phospholipid metabolism; phosphatidylethanolamine biosynthesis; phosphatidylethanolamine from CDP-diacylglycerol: step 2/2. Its function is as follows. Catalyzes the formation of phosphatidylethanolamine (PtdEtn) from phosphatidylserine (PtdSer). The sequence is that of Phosphatidylserine decarboxylase proenzyme from Bartonella quintana (strain Toulouse) (Rochalimaea quintana).